The primary structure comprises 378 residues: uncharacterized protein (378 aa).

The segment covering 1 to 11 has biased composition (basic residues); that stretch reads MSPMNRQRKNK. Residues 1 to 23 form a disordered region; sequence MSPMNRQRKNKSNVLNEKDERPG.

This is an uncharacterized protein from Caenorhabditis elegans.